A 395-amino-acid polypeptide reads, in one-letter code: MSATSSSGDVKKFQAVPKPTSNASPPPASSGFNARTLWPDLIETPENQWVFECKDIIEKIGTNGPIAVEIKKNMEKCLMYFYTLKKKLNLFDHTYTASCILFYRYWFIYGIPTAITECIHISQGILVTACKTMENNRPIEAYIKATCEFLMQNIPSLKSRTNIDKLKWEFRDKLVTNEKKILCLFGFDLNISNPKELIEEVFSGYYRFNRDHNLPENFKKAFPKILQESRNFMVQAVTQPVSLLCDGYTFIVLSLIYCGLEYKKLVDKDFRYPKNFFKDRFPIEVTPENFANIFTDYKLLEENFFNLKSNKGAKLQIDSSMIDSVIDESGDVENEVSEISDPFNYELIKSGEVKEEFLNHIETRVKDLLDKAKQESMKRKAKDPIRTPDAKKPKI.

2 disordered regions span residues 1-31 (MSAT…ASSG) and 372-395 (AKQE…KPKI). Ser24 carries the phosphoserine modification.

In terms of assembly, belongs to the BUR kinase complex composed of SGV1/BUR1 and BUR2. Interacts with SGV1.

It is found in the nucleus. In terms of biological role, component of the BUR kinase complex involved in transcription regulation. This complex phosphorylates 'Ser-120' of the UBC2/RAD6 ubiquitin-conjugating enzyme (E2), leading to monoubiquitination of histone H2B, the localization of the PAF1 complex to the chromatin, and the silencing of telomeric-associated genes. Also required for histone H3 'Lys-4' trimethylation. May phosphorylate the 'Ser-5' of the RBP1 carboxy-terminal domain (CTD) repeats. Necessary for the recovery from pheromone-induced growth arrest in the cell cycle G1 phase. Also required for vegetative growth itself. The kinase activity of the complex requires the presence of BUR2. Overexpression of BUR2 interferes with mitotic chromosome segregation. The sequence is that of Protein BUR2 (BUR2) from Saccharomyces cerevisiae (strain ATCC 204508 / S288c) (Baker's yeast).